The chain runs to 205 residues: Cyanate hydratase (205 aa).

Catalysis depends on residues Arg133, Glu136, and Ser159.

It belongs to the cyanase family.

The enzyme catalyses cyanate + hydrogencarbonate + 3 H(+) = NH4(+) + 2 CO2. In terms of biological role, catalyzes the reaction of cyanate with bicarbonate to produce ammonia and carbon dioxide. This is Cyanate hydratase from Thalassiosira pseudonana (Marine diatom).